A 211-amino-acid polypeptide reads, in one-letter code: Probable nicotinate-nucleotide adenylyltransferase (211 aa).

This sequence belongs to the NadD family.

It catalyses the reaction nicotinate beta-D-ribonucleotide + ATP + H(+) = deamido-NAD(+) + diphosphate. It functions in the pathway cofactor biosynthesis; NAD(+) biosynthesis; deamido-NAD(+) from nicotinate D-ribonucleotide: step 1/1. Catalyzes the reversible adenylation of nicotinate mononucleotide (NaMN) to nicotinic acid adenine dinucleotide (NaAD). This is Probable nicotinate-nucleotide adenylyltransferase from Wigglesworthia glossinidia brevipalpis.